We begin with the raw amino-acid sequence, 317 residues long: Glycine--tRNA ligase alpha subunit (317 aa).

This sequence belongs to the class-II aminoacyl-tRNA synthetase family. In terms of assembly, tetramer of two alpha and two beta subunits.

The protein resides in the cytoplasm. It catalyses the reaction tRNA(Gly) + glycine + ATP = glycyl-tRNA(Gly) + AMP + diphosphate. The polypeptide is Glycine--tRNA ligase alpha subunit (Lactococcus lactis subsp. cremoris (strain SK11)).